The primary structure comprises 376 residues: MKLTIAGDSHGKYMVAILEGLPSGIRVDEELIRRDLFRRRNCYGRGKRMKMEEDAFEIVSGLWKGITTGAPVTILIPNRAGNPVKDVRSVPRPGHIDYAAWVKYKLPDLNIYVERSSARWTVALTAAGSLLKSLLKEFGIEVLGFVTRLGNVEARDIPGDFEELKRRRDESVVFCPDPEATKEMVAEIDRAKEEGNTLGGKVKVIARGVPAGIGSYSDLFKKLDSKIGSLFFAIPAVKGVVIGSEEMWYGFDYLDEFELEDGKIKRKTNNLGGIEGGITNGEDVWVNVSVKPIPTTGKPLKSVDLRTMEPAKTPYVRSDVTAVPPASVVCEAALAVVISDALLEHLGDGNIDDLKRRFENENLPRWNDGFWKEHYR.

2 residues coordinate NADP(+): Arg-39 and Arg-45. Residues Arg-115–Ser-117, Gly-276, Lys-291–Thr-295, and Arg-317 each bind FMN.

This sequence belongs to the chorismate synthase family. Homotetramer. It depends on FMNH2 as a cofactor.

The enzyme catalyses 5-O-(1-carboxyvinyl)-3-phosphoshikimate = chorismate + phosphate. It functions in the pathway metabolic intermediate biosynthesis; chorismate biosynthesis; chorismate from D-erythrose 4-phosphate and phosphoenolpyruvate: step 7/7. Catalyzes the anti-1,4-elimination of the C-3 phosphate and the C-6 proR hydrogen from 5-enolpyruvylshikimate-3-phosphate (EPSP) to yield chorismate, which is the branch point compound that serves as the starting substrate for the three terminal pathways of aromatic amino acid biosynthesis. This reaction introduces a second double bond into the aromatic ring system. This is Chorismate synthase from Thermotoga maritima (strain ATCC 43589 / DSM 3109 / JCM 10099 / NBRC 100826 / MSB8).